We begin with the raw amino-acid sequence, 477 residues long: V-type proton ATPase subunit B (477 aa).

An ATP-binding site is contributed by Arg-365.

Belongs to the ATPase alpha/beta chains family. V-ATPase is a heteromultimeric enzyme composed of a peripheral catalytic V1 complex (components A to H) attached to an integral membrane V0 proton pore complex (components: a, c, c', c'', d, e, f and VOA1).

The protein resides in the vacuole membrane. In terms of biological role, non-catalytic subunit of the V1 complex of vacuolar(H+)-ATPase (V-ATPase), a multisubunit enzyme composed of a peripheral complex (V1) that hydrolyzes ATP and a membrane integral complex (V0) that translocates protons. V-ATPase is responsible for acidifying and maintaining the pH of intracellular compartments. The chain is V-type proton ATPase subunit B from Encephalitozoon cuniculi (strain GB-M1) (Microsporidian parasite).